The following is a 312-amino-acid chain: Very-long-chain 3-oxoacyl-CoA reductase (312 aa).

Residues 4–24 form a helical membrane-spanning segment; the sequence is ALPAAGFLYWVGASTVAYLAL. NADP(+) is bound at residue 50 to 79; it reads GEWAVVTGGTDGIGKSYAEELAKRGMKIVL. 2 helical membrane passes run 182-202 and 271-291; these read GAILNISSASGMYPVPLLTIY and GYPIHSLVASVSASLPSWLYF. S189 serves as a coordination point for substrate. The active-site Proton acceptor is Y202. A Di-lysine motif motif is present at residues 308–312; that stretch reads KMKMN.

It belongs to the short-chain dehydrogenases/reductases (SDR) family. 17-beta-HSD 3 subfamily.

Its subcellular location is the endoplasmic reticulum membrane. The catalysed reaction is a very-long-chain (3R)-3-hydroxyacyl-CoA + NADP(+) = a very-long-chain 3-oxoacyl-CoA + NADPH + H(+). It carries out the reaction 17beta-estradiol + NAD(+) = estrone + NADH + H(+). The enzyme catalyses 17beta-estradiol + NADP(+) = estrone + NADPH + H(+). It catalyses the reaction 3-oxooctadecanoyl-CoA + NADPH + H(+) = (3R)-hydroxyoctadecanoyl-CoA + NADP(+). The catalysed reaction is (7Z,10Z,13Z,16Z)-3-oxodocosatetraenoyl-CoA + NADPH + H(+) = (3R)-hydroxy-(7Z,10Z,13Z,16Z)-docosatetraenoyl-CoA + NADP(+). It carries out the reaction 3-oxo-(7Z,10Z,13Z,16Z,19Z)-docosapentaenoyl-CoA + NADPH + H(+) = (3R)-hydroxy-(7Z,10Z,13Z,16Z,19Z)-docosapentaenoyl-CoA + NADP(+). The enzyme catalyses (8Z,11Z,14Z)-3-oxoeicosatrienoyl-CoA + NADPH + H(+) = (3R)-hydroxy-(8Z,11Z,14Z)-eicosatrienoyl-CoA + NADP(+). It participates in lipid metabolism; fatty acid biosynthesis. It functions in the pathway steroid biosynthesis; estrogen biosynthesis. In terms of biological role, catalyzes the second of the four reactions of the long-chain fatty acids elongation cycle. This endoplasmic reticulum-bound enzymatic process, allows the addition of two carbons to the chain of long- and very long-chain fatty acids/VLCFAs per cycle. This enzyme has a 3-ketoacyl-CoA reductase activity, reducing 3-ketoacyl-CoA to 3-hydroxyacyl-CoA, within each cycle of fatty acid elongation. Thereby, it may participate in the production of VLCFAs of different chain lengths that are involved in multiple biological processes as precursors of membrane lipids and lipid mediators. May also catalyze the transformation of estrone (E1) into estradiol (E2) and play a role in estrogen formation. This chain is Very-long-chain 3-oxoacyl-CoA reductase (HSD17B12), found in Bos taurus (Bovine).